A 434-amino-acid chain; its full sequence is Glycylpeptide N-tetradecanoyltransferase 1 (434 aa).

A disordered region spans residues Met1–Leu24. Ala2 carries the N-acetylalanine modification. Tetradecanoyl-CoA is bound by residues His48 to Trp51, Leu184 to Val186, and Ser192 to Ala196. Residue Leu434 is the Proton acceptor; via carboxylate of the active site.

This sequence belongs to the NMT family. As to expression, expressed ubiquitously, with higher levels in young tissues (at protein level).

The protein localises to the cytoplasm. The catalysed reaction is N-terminal glycyl-[protein] + tetradecanoyl-CoA = N-tetradecanoylglycyl-[protein] + CoA + H(+). In terms of biological role, adds a myristoyl group to the N-terminal glycine residue of certain cellular proteins. Can also use decanoyl-CoA and lauroyl-CoA as substrates. In Arabidopsis thaliana (Mouse-ear cress), this protein is Glycylpeptide N-tetradecanoyltransferase 1 (NMT1).